A 338-amino-acid polypeptide reads, in one-letter code: MLLAIQYPSWLHPEIIPGLPFLRWYGLMYLVAFGIAYFLFSYQVKHGEFERYSGCQKAMTQDDISDLFIWGILGLILGARIFGTLVYNPETYLKAPWLIFWPFARDGAGNLTFTGFQGMSYHGGFIGGFLGVILWTKKSKFKFAAVADLMAVSIPLGYTFGRLGNFANGELYGRITTSKIGMIFPQTPISDRFYLAESWVRDFAEQAGLLVQDGASMINLPRHPSQLYEAFFEGIILWLILWLLRKKKPFDGFLVCVYTLGYGFFRFFIEYFRQPDANKGYPISFGTGAANIYVYESWKNISTGQILCSLMILASLAAMLILYLQEKKLKEKKGNIDG.

The next 4 helical transmembrane spans lie at 24–44 (WYGL…SYQV), 67–87 (LFIW…TLVY), 115–135 (GFQG…VILW), and 141–161 (FKFA…YTFG). Arg-162 is a binding site for a 1,2-diacyl-sn-glycero-3-phospho-(1'-sn-glycerol). Transmembrane regions (helical) follow at residues 224 to 244 (PSQL…LWLL), 252 to 272 (GFLV…IEYF), and 304 to 324 (GQIL…ILYL).

Belongs to the Lgt family.

The protein localises to the cell inner membrane. It carries out the reaction L-cysteinyl-[prolipoprotein] + a 1,2-diacyl-sn-glycero-3-phospho-(1'-sn-glycerol) = an S-1,2-diacyl-sn-glyceryl-L-cysteinyl-[prolipoprotein] + sn-glycerol 1-phosphate + H(+). It participates in protein modification; lipoprotein biosynthesis (diacylglyceryl transfer). In terms of biological role, catalyzes the transfer of the diacylglyceryl group from phosphatidylglycerol to the sulfhydryl group of the N-terminal cysteine of a prolipoprotein, the first step in the formation of mature lipoproteins. The protein is Phosphatidylglycerol--prolipoprotein diacylglyceryl transferase of Treponema denticola (strain ATCC 35405 / DSM 14222 / CIP 103919 / JCM 8153 / KCTC 15104).